Reading from the N-terminus, the 638-residue chain is Probable potassium transport system protein Kup (638 aa).

Residues 1 to 20 are disordered; that stretch reads MQVEHEVATEGGQAPASSGH. Helical transmembrane passes span 24–44, 67–87, 115–135, 153–173, 181–201, 228–248, 263–283, 301–321, 353–373, 382–402, 413–433, and 435–455; these read IAGL…TSPL, ILSL…VVFI, AWWL…DGMI, PAFK…LFVM, VGAI…VLGI, LIGW…EALY, WFSL…ALIL, LVYP…QAVI, IYVP…VVGF, AYGI…FVVV, AVLF…ATTV, and IFAG…LLRT.

It belongs to the HAK/KUP transporter (TC 2.A.72) family.

The protein resides in the cell inner membrane. It carries out the reaction K(+)(in) + H(+)(in) = K(+)(out) + H(+)(out). Transport of potassium into the cell. Likely operates as a K(+):H(+) symporter. This is Probable potassium transport system protein Kup from Azoarcus sp. (strain BH72).